Here is a 147-residue protein sequence, read N- to C-terminus: Hemoglobin subunit beta-A/B (147 aa).

In terms of domain architecture, Globin spans 2-147 (EWTDAERSAI…VVNALKRQYH (146 aa)). Positions 63 and 92 each coordinate heme b.

The protein belongs to the globin family. Heterotetramer of two alpha chains and two beta chains. In terms of tissue distribution, red blood cells.

Functionally, involved in oxygen transport from gills to the various peripheral tissues. This Cyprinus carpio (Common carp) protein is Hemoglobin subunit beta-A/B.